The sequence spans 398 residues: Secreted aspartic protease 2 (398 aa).

The signal sequence occupies residues 1 to 18; that stretch reads MFLKNIFIALAIALLVDA. The propeptide at 19–56 is activation peptide; the sequence is TPTTTKRSAGFVALDFSVVKTPKAFPVTNGQEGKTSKR. One can recognise a Peptidase A1 domain in the interval 70–384; the sequence is YAADITVGSN…DLDDNEISLA (315 aa). The active site involves Asp88. Residue 88 to 90 coordinates pepstatin A; sequence DTG. Cys103 and Cys115 are disulfide-bonded. 141–142 is a pepstatin A binding site; it reads GD. Zn(2+)-binding residues include Asp247 and Asp270. Asp274 is a catalytic residue. 274-278 serves as a coordination point for pepstatin A; it reads DSGTT. Cys312 and Cys350 are joined by a disulfide. N-linked (GlcNAc...) asparagine glycans are attached at residues Asn313 and Asn321.

This sequence belongs to the peptidase A1 family. Monomer.

The protein localises to the secreted. It catalyses the reaction Preferential cleavage at the carboxyl of hydrophobic amino acids, but fails to cleave 15-Leu-|-Tyr-16, 16-Tyr-|-Leu-17 and 24-Phe-|-Phe-25 of insulin B chain. Activates trypsinogen, and degrades keratin.. Secreted aspartic peptidases (SAPs) are a group of ten acidic hydrolases considered as key virulence factors. These enzymes supply the fungus with nutrient amino acids as well as are able to degrade the selected host's proteins involved in the immune defense. Induces host inflammatory cytokine production in a proteolytic activity-independent way. Plays a role in tissue damage during superficial infection. Moreover, acts toward human hemoglobin though limited proteolysis to generate a variety of antimicrobial hemocidins, enabling to compete with the other microorganisms of the same physiological niche using the microbicidal peptides generated from the host protein. In terms of biological role, plays a key role in defense against host by cleaving histatin-5 (Hst 5), a peptide from human saliva that carries out fungicidal activity. The cleavage rate decreases in an order of SAP2 &gt; SAP9 &gt; SAP3 &gt; SAP7 &gt; SAP4 &gt; SAP1 &gt; SAP8. The first cleavage occurs between residues 'Lys-17' and 'His-18' of Hst 5, giving DSHAKRHHGYKRKFHEK and HHSHRGY peptides. Simultaneously, the DSHAKRHHGYKRK peptide is also formed. Further fragmentation by SAP2 results in FHEK and DSHAKRHHGY products. This is Secreted aspartic protease 2 from Candida albicans (strain SC5314 / ATCC MYA-2876) (Yeast).